Reading from the N-terminus, the 210-residue chain is DNA-directed RNA polymerase subunit 5-like protein 1 (210 aa).

This sequence belongs to the archaeal Rpo5/eukaryotic RPB5 RNA polymerase subunit family.

Its subcellular location is the nucleus. This is DNA-directed RNA polymerase subunit 5-like protein 1 (NRPB5L1) from Arabidopsis thaliana (Mouse-ear cress).